The chain runs to 356 residues: sn-glycerol-3-phosphate import ATP-binding protein UgpC (356 aa).

The region spanning 4-235 (LKLQAVTKSW…PASLFVASFI (232 aa)) is the ABC transporter domain. 37–44 (GPSGCGKS) contributes to the ATP binding site.

This sequence belongs to the ABC transporter superfamily. sn-glycerol-3-phosphate importer (TC 3.A.1.1.3) family. In terms of assembly, the complex is composed of two ATP-binding proteins (UgpC), two transmembrane proteins (UgpA and UgpE) and a solute-binding protein (UgpB).

It is found in the cell inner membrane. The catalysed reaction is sn-glycerol 3-phosphate(out) + ATP + H2O = sn-glycerol 3-phosphate(in) + ADP + phosphate + H(+). Functionally, part of the ABC transporter complex UgpBAEC involved in sn-glycerol-3-phosphate (G3P) import. Responsible for energy coupling to the transport system. In Escherichia coli O157:H7, this protein is sn-glycerol-3-phosphate import ATP-binding protein UgpC.